The sequence spans 237 residues: Phosphoribosylaminoimidazole-succinocarboxamide synthase (237 aa).

This sequence belongs to the SAICAR synthetase family.

The enzyme catalyses 5-amino-1-(5-phospho-D-ribosyl)imidazole-4-carboxylate + L-aspartate + ATP = (2S)-2-[5-amino-1-(5-phospho-beta-D-ribosyl)imidazole-4-carboxamido]succinate + ADP + phosphate + 2 H(+). The protein operates within purine metabolism; IMP biosynthesis via de novo pathway; 5-amino-1-(5-phospho-D-ribosyl)imidazole-4-carboxamide from 5-amino-1-(5-phospho-D-ribosyl)imidazole-4-carboxylate: step 1/2. This is Phosphoribosylaminoimidazole-succinocarboxamide synthase from Halalkalibacterium halodurans (strain ATCC BAA-125 / DSM 18197 / FERM 7344 / JCM 9153 / C-125) (Bacillus halodurans).